Reading from the N-terminus, the 579-residue chain is 2-isopropylmalate synthase (579 aa).

The Pyruvate carboxyltransferase domain maps to 40-314; the sequence is PRWCAVDLRD…DPMIDFSDID (275 aa). Mg(2+) contacts are provided by aspartate 49, histidine 253, histidine 255, and asparagine 289. Residues 456–579 are regulatory domain; it reads SGKADGQWGR…VNRAIRDAQS (124 aa).

This sequence belongs to the alpha-IPM synthase/homocitrate synthase family. LeuA type 2 subfamily. Homodimer. It depends on Mg(2+) as a cofactor.

It localises to the cytoplasm. It catalyses the reaction 3-methyl-2-oxobutanoate + acetyl-CoA + H2O = (2S)-2-isopropylmalate + CoA + H(+). It functions in the pathway amino-acid biosynthesis; L-leucine biosynthesis; L-leucine from 3-methyl-2-oxobutanoate: step 1/4. Catalyzes the condensation of the acetyl group of acetyl-CoA with 3-methyl-2-oxobutanoate (2-ketoisovalerate) to form 3-carboxy-3-hydroxy-4-methylpentanoate (2-isopropylmalate). In Pseudarthrobacter chlorophenolicus (strain ATCC 700700 / DSM 12829 / CIP 107037 / JCM 12360 / KCTC 9906 / NCIMB 13794 / A6) (Arthrobacter chlorophenolicus), this protein is 2-isopropylmalate synthase.